A 234-amino-acid polypeptide reads, in one-letter code: Fibrillarin-like rRNA/tRNA 2'-O-methyltransferase (234 aa).

Residues 90–91, 109–110, 134–135, and 154–157 each bind S-adenosyl-L-methionine; these read TT, EF, DA, and DIAQ.

The protein belongs to the methyltransferase superfamily. Fibrillarin family. Interacts with nop5. Component of box C/D small ribonucleoprotein (sRNP) particles that contain rpl7ae, FlpA and nop5, plus a guide RNA.

In terms of biological role, involved in pre-rRNA and tRNA processing. Utilizes the methyl donor S-adenosyl-L-methionine to catalyze the site-specific 2'-hydroxyl methylation of ribose moieties in rRNA and tRNA. Site specificity is provided by a guide RNA that base pairs with the substrate. Methylation occurs at a characteristic distance from the sequence involved in base pairing with the guide RNA. The protein is Fibrillarin-like rRNA/tRNA 2'-O-methyltransferase of Staphylothermus marinus (strain ATCC 43588 / DSM 3639 / JCM 9404 / F1).